The sequence spans 591 residues: DEAD-box ATP-dependent RNA helicase 17 (591 aa).

Residues 23-52 (CSFTDLGLHPTLCAHLQDKMGFQAPTRIQA) carry the Q motif motif. Residues 55-248 (IPVAMSGQHM…KISLKNPVMI (194 aa)) form the Helicase ATP-binding domain. 68–75 (AATGTGKT) is a binding site for ATP. The short motif at 181–184 (DEAD) is the DEAD box element. The region spanning 293-482 (QLVQRYVKVS…SFPVNGQRLH (190 aa)) is the Helicase C-terminal domain. A disordered region spans residues 562 to 591 (GRSHQVQLKKRKKEQKRERPAKRRKIPAKR). Residues 568-591 (QLKKRKKEQKRERPAKRRKIPAKR) are compositionally biased toward basic residues.

This sequence belongs to the DEAD box helicase family. DDX31/DBP7 subfamily. As to expression, expressed in flowers and pollen grains.

Its subcellular location is the nucleus. The enzyme catalyses ATP + H2O = ADP + phosphate + H(+). In terms of biological role, may play a role in organellar ribosome biogenesis and suppress 16S rRNA maturation. The polypeptide is DEAD-box ATP-dependent RNA helicase 17 (Oryza sativa subsp. japonica (Rice)).